The primary structure comprises 616 residues: Coagulation factor XII (616 aa).

The signal sequence occupies residues 1-19; it reads MRALLLLGILLVSLESALL. The region spanning 42 to 90 is the Fibronectin type-II domain; the sequence is VTGEPCHFPFQYYRQLYYKCIQRGQRGPRPWCATTPNFEKDQRWAYCLE. Intrachain disulfides connect Cys47–Cys73, Cys61–Cys88, Cys98–Cys110, Cys104–Cys119, Cys121–Cys130, Cys135–Cys163, Cys161–Cys170, Cys178–Cys189, Cys183–Cys198, Cys200–Cys209, Cys217–Cys295, Cys238–Cys277, and Cys266–Cys290. One can recognise an EGF-like 1 domain in the interval 94 to 131; that stretch reads VKDHCNKGNPCQKGGTCVNMPNGPHCICPDHFTGKHCQ. O-linked (Fuc) threonine glycosylation occurs at Thr109. One can recognise a Fibronectin type-I domain in the interval 133–173; the sequence is EKCFEPQFLQFFQENEIWHRFEPAGVSKCQCKGPKAQCKPV. An EGF-like 2 domain is found at 174 to 210; sequence ASQVCSTNPCLNGGSCLQTEGHRLCRCPTGYAGRLCD. In terms of domain architecture, Kringle spans 216 to 295; that stretch reads RCYSDRGLSY…SWQYCRLARC (80 aa). Residues Asn249, Asn271, and Asn335 are each glycosylated (N-linked (GlcNAc...) asparagine). The disordered stretch occupies residues 303–342; it reads PPILTPTQSPSEHQDSPLLSREPQPTTQTPSQNLTSAWCA. Polar residues predominate over residues 325-338; sequence PQPTTQTPSQNLTS. Cystine bridges form between Cys358–Cys485, Cys396–Cys412, Cys404–Cys474, Cys435–Cys438, Cys501–Cys570, Cys533–Cys549, and Cys560–Cys591. The region spanning 372 to 615 is the Peptidase S1 domain; it reads IVGGLVALPG…YLAWIQEHTT (244 aa). Catalysis depends on His411, which acts as the Charge relay system. N-linked (GlcNAc...) asparagine glycosylation is present at Asn432. The active-site Charge relay system is Asp460. The Charge relay system role is filled by Ser564.

The protein belongs to the peptidase S1 family. Interacts with HRG; the interaction, which is enhanced in the presence of zinc ions and inhibited by heparin-binding, inhibits factor XII autoactivation and contact-initiated coagulation. O- and N-glycosylated.

Its subcellular location is the secreted. The enzyme catalyses Selective cleavage of Arg-|-Ile bonds in factor VII to form factor VIIa and factor XI to form factor XIa.. Its activity is regulated as follows. Activity is promoted in the presence of negatively charged surfaces. In terms of biological role, factor XII is a serum glycoprotein that participates in the initiation of blood coagulation, fibrinolysis, and the generation of bradykinin and angiotensin. Prekallikrein is cleaved by factor XII to form kallikrein, which then cleaves factor XII first to alpha-factor XIIa and then trypsin cleaves it to beta-factor XIIa. Alpha-factor XIIa activates factor XI to factor XIa. The sequence is that of Coagulation factor XII (F12) from Sus scrofa (Pig).